Consider the following 575-residue polypeptide: Intermediate filament protein ifa-1 (575 aa).

2 disordered regions span residues 1–30 (MMEITRETMSFTSTTPSARAPLGGRTTGNV) and 45–72 (SGAGSGLSPFGQNAASTIRDSREREKKE). A head region spans residues 1–72 (MMEITRETMS…RDSREREKKE (72 aa)). Over residues 7-17 (ETMSFTSTTPS) the composition is skewed to polar residues. Residues 63 to 72 (RDSREREKKE) are compositionally biased toward basic and acidic residues. Positions 69-422 (EKKEMSDLND…KMLEGEENRA (354 aa)) constitute an IF rod domain. A coil 1A region spans residues 73–104 (MSDLNDRLASYIEKVRFLEAQNRKLAADLDAL). Residues 105–118 (RSKWGKDTHNIRNM) are linker 1. Residues 119–256 (YEGELVDAQK…RVHDNEIKEL (138 aa)) are coil 1B. Residues 257 to 274 (QTLASRDTTPENREFFKN) form a linker 12 region. Residues 275–422 (ELSSAIRDIR…KMLEGEENRA (148 aa)) form a coil 2 region. The tract at residues 423-572 (GLKQLVEQVV…EERATHIQRQ (150 aa)) is tail. Residues 455 to 572 (SRQSFQRSAK…EERATHIQRQ (118 aa)) enclose the LTD domain.

It belongs to the intermediate filament family. Forms some heteromeric filaments with ifb-1. Isoform d is abundantly expressed in the marginal cells of the pharynx, forming apicobasally oriented thick filament bundles that are attached to the apical and basal plasma membrane by hemi-adherens junctions. Expression of isoform c is also seen in the excretory cells and in the uterus. Isoform c is detectable in the amphid sensory neurins and the pharyngeal-intestinal valve. Both isoform c and isoform d are expressed in the rectum and vulva and in some neurons of the tail. In larvae, expression is seen in the excretory cell, the vulva, the rectum and in the thick filament bundles of the pharynx. Expression in pharynx begins in late embryos.

Its subcellular location is the cytoplasm. Its function is as follows. Cytoplasmic intermediate filaments make up the structural component of the cytoskeleton providing mechanical strength to cells. Essential protein required during embryogenesis especially for survival past the L1 larva stage, involved in intestine morphogenesis. The polypeptide is Intermediate filament protein ifa-1 (ifa-1) (Caenorhabditis elegans).